A 376-amino-acid polypeptide reads, in one-letter code: Arabinogalactan endo-beta-1,4-galactanase (376 aa).

The signal sequence occupies residues Met-1 to Ala-17. The Proton donor role is filled by Glu-161. Glu-270 functions as the Nucleophile in the catalytic mechanism. Asp-281 and Asn-285 together coordinate Ca(2+).

It belongs to the glycosyl hydrolase 53 family. Requires Ca(2+) as cofactor.

It carries out the reaction The enzyme specifically hydrolyzes (1-&gt;4)-beta-D-galactosidic linkages in type I arabinogalactans.. The polypeptide is Arabinogalactan endo-beta-1,4-galactanase (ganB) (Cellvibrio japonicus (strain Ueda107) (Pseudomonas fluorescens subsp. cellulosa)).